Reading from the N-terminus, the 120-residue chain is Insulin-like peptide 3 (120 aa).

Positions 1-29 (MGIEMRCQDRRILLPSLLLLILMIGGVQA) are cleaved as a signal peptide. 3 cysteine pairs are disulfide-bonded: Cys-34–Cys-101, Cys-46–Cys-114, and Cys-100–Cys-105. Residues 51-89 (NAMTKRTLDPVNFNQIDGFEDRSLLERLLSDSSVQMLKT) constitute a propeptide, connecting peptide.

The protein belongs to the insulin family. Heterodimer of a B chain and an A chain linked by two disulfide bonds. In terms of tissue distribution, expressed at a high level in seven cells of each larval brain hemisphere that may correspond to neurosecretory cells.

The protein resides in the secreted. Its function is as follows. Possible ligand of InR/insulin-like receptor. The sequence is that of Insulin-like peptide 3 from Drosophila melanogaster (Fruit fly).